Reading from the N-terminus, the 368-residue chain is G-protein coupled receptor 183-A (368 aa).

Residues 1–27 (METTSANFTQNDSNVCTNLYNHRGWAQ) lie on the Extracellular side of the membrane. N-linked (GlcNAc...) asparagine glycans are attached at residues Asn-7 and Asn-11. Residues 28-53 (YFLPAMYSLICIVGLLGNVLALHVIW) form a helical membrane-spanning segment. The Cytoplasmic portion of the chain corresponds to 54 to 73 (PNLKKINSTTLYSANLVVSD). A helical membrane pass occupies residues 74 to 91 (ILFSLALPLRVVYYARGF). The Extracellular segment spans residues 92-101 (DWPMGEGLCK). A disulfide bridge connects residues Cys-100 and Cys-178. A helical transmembrane segment spans residues 102–123 (AVALLFYINMYAGVNFMTCLSV). Over 124-145 (DRFIAVVLPLRFSRFRKVQKVR) the chain is Cytoplasmic. Residues 146–164 (YICGVVWVVVLMQTLPLLS) form a helical membrane-spanning segment. Residues 165–189 (MPMTNIEQSGHITCMEYPNFEKIDN) lie on the Extracellular side of the membrane. The chain crosses the membrane as a helical span at residues 190-212 (LPVMLIGAVVLGFGIPVITILVC). The Cytoplasmic segment spans residues 213-238 (YTALCLKLRHLAKSNKLTEKSGRSSK). A helical membrane pass occupies residues 239–262 (AIGVICTVILVFVVCYSPYHVDLL). Over 263–282 (QYMIKKLRYDPDCSELHKFQ) the chain is Extracellular. The helical transmembrane segment at 283 to 307 (ISLHITVCFMNLNSCLDPFIYFFAC) threads the bilayer. At 308 to 368 (KGYKKKVLKL…SSVLLNSLEQ (61 aa)) the chain is on the cytoplasmic side.

The protein belongs to the G-protein coupled receptor 1 family.

The protein localises to the cell membrane. Its function is as follows. G-protein coupled receptor expressed in lymphocytes that acts as a chemotactic receptor for B-cells, T-cells, splenic dendritic cells, monocytes/macrophages and astrocytes. Receptor for oxysterol 7-alpha,25-dihydroxycholesterol (7-alpha,25-OHC) and other related oxysterols. Mediates cell positioning and movement of a number of cells by binding the 7-alpha,25-OHC ligand that forms a chemotactic gradient. Binding of 7-alpha,25-OHC mediates the correct localization of B-cells during humoral immune responses. The polypeptide is G-protein coupled receptor 183-A (gpr183a) (Danio rerio (Zebrafish)).